The chain runs to 599 residues: Protein ref(2)P (599 aa).

The 86-residue stretch at 3–88 (EKLLKITYQG…CESNMHVQVA (86 aa)) folds into the PB1 domain. The ZZ-type zinc-finger motif lies at 122–173 (HDSVQCDGCGLAPLIGFRYKCVQCSNFDLCQKCESAHKHPEHLMLRMPTNNG). 8 residues coordinate Zn(2+): Cys127, Cys130, Cys142, Cys145, Cys151, Cys154, His160, and His163. Disordered regions lie at residues 192-225 (RRSRGHCPFQEASQPAPAAEPARDSRRERRHARR), 245-319 (TTAT…INLD), 357-453 (GIFA…LDPE), and 507-544 (ASANTQTAQVDTVSTSTSTTSVTTNSVGTSPAAPDDKR). The segment covering 199–211 (PFQEASQPAPAAE) has biased composition (low complexity). The segment covering 276–286 (KATESEAKPTE) has biased composition (basic and acidic residues). The segment covering 291 to 319 (NTDQSVPTTEDPVTTPRSTEPTTPVINLD) has biased composition (polar residues). The span at 375–411 (QSQSSGQSAASSASQSAVPSAAPSANQSNVPSANQSA) shows a compositional bias: low complexity. Tandem repeats lie at residues 386–393 (SASQSAVP), 399–406 (ANQSNVPS), and 407–413 (ANQSATP). The 3 X 8 AA repeats of S-A-N-Q-S-X-X-P stretch occupies residues 386–413 (SASQSAVPSAAPSANQSNVPSANQSATP). A compositionally biased stretch (polar residues) spans 412 to 423 (TPSISGSISDAQ). Residues 511–536 (TQTAQVDTVSTSTSTTSVTTNSVGTS) show a composition bias toward low complexity. Residues 550 to 595 (HTDERINQSIHAMMAMGFSNEGAWLTQLLESVQGNIPAALDVMHVS) enclose the UBA domain.

As to quaternary structure, interacts with aPKC and Traf6.

It localises to the nucleus. The protein localises to the cytoplasm. Functionally, required for selective autophagy activation by ubiquitinated proteins. Implicated in sigma rhabdovirus multiplication and necessary for male fertility. Involved in activating transcription of Drs. This Drosophila simulans (Fruit fly) protein is Protein ref(2)P (ref(2)P).